Reading from the N-terminus, the 436-residue chain is GTPase Obg (436 aa).

Residues 2-160 enclose the Obg domain; that stretch reads SMFLDTAKIQ…RELLLELKVL (159 aa). The OBG-type G domain maps to 161–338; sequence ADVGLVGFPS…LLDATAELLD (178 aa). Residues 167–174, 192–196, 214–217, 284–287, and 319–321 each bind GTP; these read GFPSVGKS, FTTIV, DLPG, NKMD, and SSL. 2 residues coordinate Mg(2+): Ser174 and Thr194. Positions 358 to 436 constitute an OCT domain; the sequence is GFDEEAPAFE…IGKFEFEFVD (79 aa).

It belongs to the TRAFAC class OBG-HflX-like GTPase superfamily. OBG GTPase family. Monomer. Mg(2+) is required as a cofactor.

The protein resides in the cytoplasm. In terms of biological role, an essential GTPase which binds GTP, GDP and possibly (p)ppGpp with moderate affinity, with high nucleotide exchange rates and a fairly low GTP hydrolysis rate. Plays a role in control of the cell cycle, stress response, ribosome biogenesis and in those bacteria that undergo differentiation, in morphogenesis control. This chain is GTPase Obg, found in Streptococcus sanguinis (strain SK36).